The chain runs to 476 residues: 3-isopropylmalate dehydratase large subunit (476 aa).

[4Fe-4S] cluster contacts are provided by C353, C413, and C416.

The protein belongs to the aconitase/IPM isomerase family. LeuC type 1 subfamily. In terms of assembly, heterodimer of LeuC and LeuD. [4Fe-4S] cluster serves as cofactor.

It carries out the reaction (2R,3S)-3-isopropylmalate = (2S)-2-isopropylmalate. Its pathway is amino-acid biosynthesis; L-leucine biosynthesis; L-leucine from 3-methyl-2-oxobutanoate: step 2/4. Its function is as follows. Catalyzes the isomerization between 2-isopropylmalate and 3-isopropylmalate, via the formation of 2-isopropylmaleate. This chain is 3-isopropylmalate dehydratase large subunit, found in Yersinia pseudotuberculosis serotype O:1b (strain IP 31758).